Reading from the N-terminus, the 118-residue chain is NILQFRKMIQCANKGSRAAWHYLDYGCYCGPGGRGTPVDELDRCCKIHDDCYIEAGKDGCYPKLTWYSWQCTGDAPTCNPKSKCKDFVCACDAAAAKCFAKAAYNKANWNIDTKTRCK.

Cystine bridges form between Cys11–Cys71, Cys27–Cys117, Cys29–Cys45, Cys44–Cys98, Cys51–Cys91, Cys60–Cys84, and Cys78–Cys89. Positions 28, 30, and 32 each coordinate Ca(2+). His48 is a catalytic residue. Position 49 (Asp49) interacts with Ca(2+). Asp92 is a catalytic residue.

The protein belongs to the phospholipase A2 family. Group I subfamily. D49 sub-subfamily. Ca(2+) is required as a cofactor. In terms of tissue distribution, expressed by the venom gland.

The protein resides in the secreted. It catalyses the reaction a 1,2-diacyl-sn-glycero-3-phosphocholine + H2O = a 1-acyl-sn-glycero-3-phosphocholine + a fatty acid + H(+). In terms of biological role, PLA2 catalyzes the calcium-dependent hydrolysis of the 2-acyl groups in 3-sn-phosphoglycerides. The polypeptide is Basic phospholipase A2 PA-15 (Pseudechis australis (Mulga snake)).